We begin with the raw amino-acid sequence, 633 residues long: Probable potassium transport system protein Kup (633 aa).

12 helical membrane-spanning segments follow: residues 19–39 (LGML…SPLY), 61–81 (ILAL…VLFI), 112–132 (VLVI…MITP), 148–168 (SGLE…LFLI), 179–199 (LFGP…INGI), 217–237 (FFIV…LALT), 258–278 (WFAL…ALLL), 290–310 (LLAP…ATVI), 348–368 (IYIG…VLGF), 380–400 (VAVT…MLLL), 405–425 (PVLA…FFAA), and 430–450 (IFQG…LMTT).

This sequence belongs to the HAK/KUP transporter (TC 2.A.72) family.

It is found in the cell inner membrane. The enzyme catalyses K(+)(in) + H(+)(in) = K(+)(out) + H(+)(out). Functionally, transport of potassium into the cell. Likely operates as a K(+):H(+) symporter. The polypeptide is Probable potassium transport system protein Kup (Pseudomonas fluorescens (strain ATCC BAA-477 / NRRL B-23932 / Pf-5)).